Reading from the N-terminus, the 120-residue chain is MDYEFLRDVTGGVKVRMSMGHEVVGHWFNEEVKDNLSLLDEVEQAARTVKGSERSWQRAGHEYTIWMDGEEVMIRANQLDFSGDEMEEGMSYYNEESLSLCGMEDFLRVVAAYREFVSKA.

The protein belongs to the UPF0231 family.

This Salmonella heidelberg (strain SL476) protein is UPF0231 protein YacL.